The following is an 83-amino-acid chain: UPF0297 protein Moth_1643 (83 aa).

The protein belongs to the UPF0297 family.

This Moorella thermoacetica (strain ATCC 39073 / JCM 9320) protein is UPF0297 protein Moth_1643.